The following is a 310-amino-acid chain: tRNA-cytidine(32) 2-sulfurtransferase (310 aa).

Positions 45–50 (SGGKDS) match the PP-loop motif motif. Residues Cys120, Cys123, and Cys211 each coordinate [4Fe-4S] cluster.

Belongs to the TtcA family. In terms of assembly, homodimer. Mg(2+) is required as a cofactor. The cofactor is [4Fe-4S] cluster.

It is found in the cytoplasm. The catalysed reaction is cytidine(32) in tRNA + S-sulfanyl-L-cysteinyl-[cysteine desulfurase] + AH2 + ATP = 2-thiocytidine(32) in tRNA + L-cysteinyl-[cysteine desulfurase] + A + AMP + diphosphate + H(+). It participates in tRNA modification. Catalyzes the ATP-dependent 2-thiolation of cytidine in position 32 of tRNA, to form 2-thiocytidine (s(2)C32). The sulfur atoms are provided by the cysteine/cysteine desulfurase (IscS) system. This is tRNA-cytidine(32) 2-sulfurtransferase from Shewanella putrefaciens (strain CN-32 / ATCC BAA-453).